Here is a 453-residue protein sequence, read N- to C-terminus: Homeobox protein meis3 (453 aa).

A disordered region spans residues 33 to 64 (HHSLSQSAPYGSTGAAHRVPMPPGMGSNDGLK). The MEIS N-terminal domain occupies 102–185 (GGDVCSSDSF…PIDLVIDDRD (84 aa)). Residues 192-272 (LEDFTGSCTS…RDKKRNKKRG (81 aa)) are disordered. Residues 197 to 209 (GSCTSLSDQNNSW) show a composition bias toward polar residues. Residues 218–230 (STHSGTPGPSSGG) are compositionally biased toward low complexity. Polar residues predominate over residues 231-242 (LASQSGDNSSEQ). The segment at residues 267-329 (RNKKRGIFPK…NARRRIVQPM (63 aa)) is a DNA-binding region (homeobox).

The protein belongs to the TALE/MEIS homeobox family.

Its subcellular location is the nucleus. In terms of biological role, a caudalizing protein which is required to pattern the anterior/posterior (A/P) axis during central nervous system (CNS) formation. Inhibits anterior neural expression and acts as a transcriptional activator to induce posterior neural gene expression. Maintains a proper A/P balance required for hindbrain formation by activating the FGF/MAPK pathway, which modulates the planar cell polarity (PCP) pathway. Interacts with retinoid signaling during hindbrain patterning. The protein is Homeobox protein meis3 of Xenopus tropicalis (Western clawed frog).